Consider the following 75-residue polypeptide: Putative membrane protein insertion efficiency factor (75 aa).

This sequence belongs to the UPF0161 family.

Its subcellular location is the cell membrane. Functionally, could be involved in insertion of integral membrane proteins into the membrane. The protein is Putative membrane protein insertion efficiency factor (ytjA) of Bacillus subtilis (strain 168).